Here is a 369-residue protein sequence, read N- to C-terminus: 4-hydroxy-3-methylbut-2-en-1-yl diphosphate synthase (flavodoxin) (369 aa).

[4Fe-4S] cluster contacts are provided by Cys-270, Cys-273, Cys-305, and Glu-312.

This sequence belongs to the IspG family. [4Fe-4S] cluster serves as cofactor.

It catalyses the reaction (2E)-4-hydroxy-3-methylbut-2-enyl diphosphate + oxidized [flavodoxin] + H2O + 2 H(+) = 2-C-methyl-D-erythritol 2,4-cyclic diphosphate + reduced [flavodoxin]. It participates in isoprenoid biosynthesis; isopentenyl diphosphate biosynthesis via DXP pathway; isopentenyl diphosphate from 1-deoxy-D-xylulose 5-phosphate: step 5/6. Functionally, converts 2C-methyl-D-erythritol 2,4-cyclodiphosphate (ME-2,4cPP) into 1-hydroxy-2-methyl-2-(E)-butenyl 4-diphosphate. This chain is 4-hydroxy-3-methylbut-2-en-1-yl diphosphate synthase (flavodoxin), found in Pseudomonas syringae pv. syringae (strain B728a).